The sequence spans 139 residues: MVEKFVGTWKIADSHNFGEYLKAIGAPKELSDGGDATTPTLYISQKDGDKMTVKIENGPPTFLDTQVKFKLGEEFDEFPSDRRKGVKSVVNLVGEKLVYVQKWDGKETTYVREIKDGKLVVTLTMGDVVAVRSYRRATE.

Residues N57, T61, S80, R112, and R132–Y134 each bind (4Z,15Z)-bilirubin IXalpha.

This sequence belongs to the calycin superfamily. Fatty-acid binding protein (FABP) family. In terms of assembly, monomer. Detected in small-diameter muscle fibers from the white muscle layer from juvenile animals (glass eels) (at protein level). Detected in small-diameter muscle fibers from juvenile animals (glass eels).

The protein resides in the cytoplasm. Functionally, beta-barrel protein that binds unconjugated bilirubin with high affinity. Excitation of the bilirubin-bound protein gives rise to green fluorescence, both under normoxia and hypoxia. The apoprotein is not fluorescent. Does not emit fluorescence in the presence of ditauro-bilirubin, urobilin or biliverdin. In Anguilla japonica (Japanese eel), this protein is Bilirubin-inducible fluorescent protein UnaG.